The sequence spans 586 residues: Mitochondrial tRNA methylthiotransferase CDK5RAP1 (586 aa).

Residues 1–30 (MHPLQRVFRAQRLSAPLTSMCWVLLRTFRA) constitute a mitochondrion transit peptide. A disordered region spans residues 68–90 (ASVPQEKPSSPEVEDPPPYLSGD). The 121-residue stretch at 97–217 (RKVYLETYGC…LPRLLAVVES (121 aa)) folds into the MTTase N-terminal domain. [4Fe-4S] cluster is bound by residues C106, C142, C180, C255, C259, and C262. Residues 241 to 495 (SPSATSAFVS…ITVFREEASK (255 aa)) form the Radical SAM core domain. Residues 498-573 (ATSVGCTQLV…SQTLKGHILC (76 aa)) enclose the TRAM domain.

It belongs to the methylthiotransferase family. MiaB subfamily. As to quaternary structure, interacts with CDK5R1 (p35 form). CDK5RAP1, CDK5RAP2 and CDK5RAP3 show competitive binding to CDK5R1. Forms a complex with CDK5R1 and CDK5. [4Fe-4S] cluster serves as cofactor. As to expression, expressed in brain.

The protein localises to the mitochondrion inner membrane. The catalysed reaction is N(6)-dimethylallyladenosine(37) in tRNA + (sulfur carrier)-SH + AH2 + 2 S-adenosyl-L-methionine = 2-methylsulfanyl-N(6)-dimethylallyladenosine(37) in tRNA + (sulfur carrier)-H + 5'-deoxyadenosine + L-methionine + A + S-adenosyl-L-homocysteine + 2 H(+). Functionally, methylthiotransferase that catalyzes the conversion of N6-(dimethylallyl)adenosine (i(6)A) to 2-methylthio-N6-(dimethylallyl)adenosine (ms(2)i(6)A) at position 37 (adjacent to the 3'-end of the anticodon) of four mitochondrial DNA-encoded tRNAs (Ser(UCN), Phe, Tyr and Trp). Essential for efficient and highly accurate protein translation by the ribosome. Specifically inhibits CDK5 activation by CDK5R1. Essential for efficient mitochondrial protein synthesis and respiratory chain. The protein is Mitochondrial tRNA methylthiotransferase CDK5RAP1 (Cdk5rap1) of Rattus norvegicus (Rat).